The following is an 833-amino-acid chain: Phosphatidylinositol-3-phosphatase myotubularin-2 (833 aa).

One can recognise a GRAM domain in the interval 42 to 109 (GSYSNLDCLL…VAIEKFNKLA (68 aa)). A Myotubularin phosphatase domain is found at 181-647 (TNPKERLLNE…LAPTLWPQFH (467 aa)). Substrate contacts are provided by residues 329-332 (NGAK), 354-355 (NI), 440-446 (CSDGWDR), and R486. Catalysis depends on C440, which acts as the Phosphocysteine intermediate. Residues 503–530 (QSSSARSFPSSPVRQSPGSAAAQSSSSS) are disordered. The segment covering 504 to 530 (SSSARSFPSSPVRQSPGSAAAQSSSSS) has biased composition (low complexity). The stretch at 660-717 (ETEDQCRAMTVKYSEMKKEKEEAERKVDELSSAMESLNEELLNERDISRAARESAKRA) forms a coiled coil. The segment at 753–772 (KCSHSIPQKQSEDNTTDVSE) is disordered.

Belongs to the protein-tyrosine phosphatase family. Non-receptor class myotubularin subfamily. As to expression, mostly expressed in flowers and roots, and, to a lower extent, in siliques and leaves.

It is found in the cytoplasm. It catalyses the reaction a 1,2-diacyl-sn-glycero-3-phospho-(1D-myo-inositol-3-phosphate) + H2O = a 1,2-diacyl-sn-glycero-3-phospho-(1D-myo-inositol) + phosphate. The enzyme catalyses a 1,2-diacyl-sn-glycero-3-phospho-(1D-myo-inositol-3,5-bisphosphate) + H2O = a 1,2-diacyl-sn-glycero-3-phospho-(1D-myo-inositol-5-phosphate) + phosphate. Functionally, phosphatase with phosphoinositide 3'-phosphatase activity that can use phosphatidylinositol-3-phosphate (PtdIns3P) and phosphatidylinositol-3,5-diphosphate (PtdIns3,5P(2)) as substrates and produces phosphatidylinositol-5-phosphate (PtdIns5P); participates in pathway(s) that transfer gene regulatory signals to the nucleus. The protein is Phosphatidylinositol-3-phosphatase myotubularin-2 (MTM2) of Arabidopsis thaliana (Mouse-ear cress).